The following is a 105-amino-acid chain: uncharacterized protein (105 aa).

The Hcy-binding domain occupies 1–101; that stretch reads MMDLGDKINP…KDIQEISAAV (101 aa).

This is an uncharacterized protein from Saccharomyces cerevisiae (strain ATCC 204508 / S288c) (Baker's yeast).